Here is a 1253-residue protein sequence, read N- to C-terminus: Cytoplasmic FMR1-interacting protein 2 (1253 aa).

Lys1037 is modified (N6-acetyllysine).

The protein belongs to the CYFIP family. Component of the WAVE1 complex composed of ABI2, CYFIP2, BRK1, NCKAP1 and WASF1/WAVE1. Interacts with RAC1 (activated form) which causes the complex to dissociate, releasing activated WASF1. The complex can also be activated by NCK1. Interacts with SHANK3; the interaction mediates the association of SHANK3 with the WAVE1 complex. Interacts with FMR1; the interaction occurs in a RNA-dependent manner. Interacts with FXR1 and FXR2. Interacts with TMEM108 (via N-terminus); the interaction associates TMEM108 with the WAVE1 complex.

The protein localises to the cytoplasm. The protein resides in the nucleus. It is found in the perinuclear region. It localises to the synapse. Its subcellular location is the synaptosome. Its function is as follows. Involved in T-cell adhesion and p53-dependent induction of apoptosis. Does not bind RNA. As component of the WAVE1 complex, required for BDNF-NTRK2 endocytic trafficking and signaling from early endosomes. The polypeptide is Cytoplasmic FMR1-interacting protein 2 (Pongo abelii (Sumatran orangutan)).